Consider the following 587-residue polypeptide: Putative adhesin (587 aa).

The N-terminal stretch at 1-19 (MKFAISTLLIILQAAAVFA) is a signal peptide. An intrachain disulfide couples Cys211 to Cys261. Residue Asn239 is glycosylated (N-linked (GlcNAc...) asparagine). A run of 4 repeats spans residues 432–455 (IVTV…TYTK), 466–489 (IVTV…TYTK), 491–512 (PEIV…YHDV), and 513–531 (PEVV…TTTY). Residues 432 to 531 (IVTVITKEGG…EGGEKVTTTY (100 aa)) are 4 X 24 AA approximate tandem repeats, Thr-rich. A lipid anchor (GPI-anchor amidated serine) is attached at Ser562. A propeptide spans 563 to 587 (EAQVNLGSKSAVGLLAIVPMLFLAI) (removed in mature form).

The GPI-anchor is attached to the protein in the endoplasmic reticulum and serves to target the protein to the cell surface. There, the glucosamine-inositol phospholipid moiety is cleaved off and the GPI-modified mannoprotein is covalently attached via its lipidless GPI glycan remnant to the 1,6-beta-glucan of the outer cell wall layer.

The protein localises to the cell membrane. It is found in the secreted. It localises to the cell wall. Its function is as follows. Putative adhesion protein. May be involved in cell-cell interaction, interacting with other proteins by salt bridges and hydrogen bonds. In Komagataella phaffii (strain ATCC 76273 / CBS 7435 / CECT 11047 / NRRL Y-11430 / Wegner 21-1) (Yeast), this protein is Putative adhesin.